Here is a 628-residue protein sequence, read N- to C-terminus: ATP-dependent zinc metalloprotease FtsH (628 aa).

Residues 1–7 lie on the Stromal side of the membrane; that stretch reads MKLSWKT. The helical transmembrane segment at 8–28 threads the bilayer; the sequence is LLLWSLPIFVIGFFFWQGFLG. Residues 29-118 lie on the Lumenal side of the membrane; sequence PTTTDVGSNI…AHPPKSTSAV (90 aa). The chain crosses the membrane as a helical span at residues 119 to 139; sequence WGLLGNLLFPLLLVGGLAFLF. Residues 140–628 are Stromal-facing; the sequence is RRSNNASGGP…PEKNYYISQF (489 aa). An ATP-binding site is contributed by 213 to 220; sequence GPPGTGKT. Histidine 434 contributes to the Zn(2+) binding site. Glutamate 435 is a catalytic residue. Residues histidine 438 and aspartate 512 each coordinate Zn(2+).

This sequence in the central section; belongs to the AAA ATPase family. The protein in the C-terminal section; belongs to the peptidase M41 family. In terms of assembly, homohexamer. Zn(2+) is required as a cofactor.

Its subcellular location is the plastid. The protein localises to the chloroplast thylakoid membrane. In terms of biological role, acts as a processive, ATP-dependent zinc metallopeptidase. The polypeptide is ATP-dependent zinc metalloprotease FtsH (Pyropia yezoensis (Susabi-nori)).